The following is an 859-amino-acid chain: Ribose import ATP-binding protein RbsA 1 (859 aa).

The segment at 1–351 is disordered; that stretch reads MRASLENGDD…AARAPDEASE (351 aa). The segment at 1–353 is unknown; it reads MRASLENGDD…RAPDEASEEA (353 aa). Positions 8–17 are enriched in basic and acidic residues; that stretch reads GDDHDAHRLV. Basic residues predominate over residues 28-43; the sequence is RAARRRAFARARRGER. Basic and acidic residues-rich tracts occupy residues 44–80, 89–129, and 137–167; these read RARG…DRRA, RREQ…EEGG, and RERE…EGDR. Over residues 168 to 179 the composition is skewed to basic residues; sequence RRRRSRDPRRHP. Basic and acidic residues-rich tracts occupy residues 193–214, 239–250, 263–281, 288–301, and 308–323; these read GARE…GARE, RLDGRAVRDRGV, AGGD…RDVR, DSPR…EEVG, and DSGR…REDV. ABC transporter domains are found at residues 358–594 and 607–851; these read LALT…VGRR and RDAA…TSDV. 390 to 397 is an ATP binding site; the sequence is GENGAGKS.

Belongs to the ABC transporter superfamily. Ribose importer (TC 3.A.1.2.1) family. The complex is composed of an ATP-binding protein (RbsA), two transmembrane proteins (RbsC) and a solute-binding protein (RbsB).

The protein localises to the cell inner membrane. It catalyses the reaction D-ribose(out) + ATP + H2O = D-ribose(in) + ADP + phosphate + H(+). In terms of biological role, part of the ABC transporter complex RbsABC involved in ribose import. Responsible for energy coupling to the transport system. This Burkholderia pseudomallei (strain 1710b) protein is Ribose import ATP-binding protein RbsA 1.